The sequence spans 579 residues: Arginine--tRNA ligase (579 aa).

The 'HIGH' region signature appears at 123 to 133 (PNLAKEMHVGH).

It belongs to the class-I aminoacyl-tRNA synthetase family. In terms of assembly, monomer.

The protein localises to the cytoplasm. The catalysed reaction is tRNA(Arg) + L-arginine + ATP = L-arginyl-tRNA(Arg) + AMP + diphosphate. The chain is Arginine--tRNA ligase from Cellvibrio japonicus (strain Ueda107) (Pseudomonas fluorescens subsp. cellulosa).